A 285-amino-acid polypeptide reads, in one-letter code: Aldo-keto reductase (285 aa).

165-175 (APLAGGILTGK) contacts NADP(+).

This sequence belongs to the aldo/keto reductase family. Aldo/keto reductase 2 subfamily.

This is Aldo-keto reductase from Babesia bovis.